The primary structure comprises 489 residues: MSTHFIDGSWVTGAGEPFASRNPVTQAVVFEGRAASEEQVDAAVAAARGAFAAWRDRGLEERAALVKRFAGVLGEHKARLADVIGLETGKPRWEALTEVQTMIGKIDVSLMAWRERTGERQAEAGDATAVVRHRPHGVVAVLGPYNFPGHLPNGHIVPALIAGNCVVFKPSELTPRVAEETARLWEKAGIPAGVLNLVQGGRRTGVALAGHPGIDGLFFTGSSGTGNALHRQLAGQPEKILALEMGGNNPLIVQDVANTEAAIHHILQSSFISAGQRCTCARRLLVPATPEGDALLGRLVDAASRLKVGRYDDAEQPFMGAVISLAAADRLLAAQARLVSLGGEVLLEMRRLEEGTALLSPGILDVSAIKELPDEEHFGPLVQVQRYGSFDEALSLANRTRYGLAAGLISDRRELYERFWRESRAGIVNWNKPLTGASSAAPFGGVGSSGNHRPSAYYAADYCAYPVAGLEAAAVALPGQLAPGMRLNS.

221-226 (GSSGTG) lines the NAD(+) pocket. Active-site residues include Glu-244 and Cys-278.

Belongs to the aldehyde dehydrogenase family. AstD subfamily.

The enzyme catalyses N-succinyl-L-glutamate 5-semialdehyde + NAD(+) + H2O = N-succinyl-L-glutamate + NADH + 2 H(+). The protein operates within amino-acid degradation; L-arginine degradation via AST pathway; L-glutamate and succinate from L-arginine: step 4/5. In terms of biological role, catalyzes the NAD-dependent reduction of succinylglutamate semialdehyde into succinylglutamate. The protein is N-succinylglutamate 5-semialdehyde dehydrogenase of Sorangium cellulosum (strain So ce56) (Polyangium cellulosum (strain So ce56)).